A 174-amino-acid chain; its full sequence is Large ribosomal subunit protein bL12cy (174 aa).

A chloroplast-targeting transit peptide spans 1 to 45 (MASTTFSSAFSILSLPSSSPSPPPWAPRTLPVANRRRRAAAVAST).

This sequence belongs to the bacterial ribosomal protein bL12 family.

It localises to the plastid. It is found in the chloroplast. This chain is Large ribosomal subunit protein bL12cy (RPL12-2), found in Secale cereale (Rye).